The chain runs to 418 residues: 1-deoxy-D-xylulose 5-phosphate reductoisomerase (418 aa).

Positions 32, 33, 34, 35, and 150 each coordinate NADPH. 1-deoxy-D-xylulose 5-phosphate is bound at residue lysine 151. Glutamate 152 is an NADPH binding site. Aspartate 174 serves as a coordination point for Mn(2+). The 1-deoxy-D-xylulose 5-phosphate site is built by serine 175, glutamate 176, serine 200, and histidine 223. Glutamate 176 lines the Mn(2+) pocket. Glycine 229 serves as a coordination point for NADPH. 1-deoxy-D-xylulose 5-phosphate-binding residues include serine 236, asparagine 241, lysine 242, and glutamate 245. Glutamate 245 is a binding site for Mn(2+).

Belongs to the DXR family. Mg(2+) is required as a cofactor. It depends on Mn(2+) as a cofactor.

The enzyme catalyses 2-C-methyl-D-erythritol 4-phosphate + NADP(+) = 1-deoxy-D-xylulose 5-phosphate + NADPH + H(+). It participates in isoprenoid biosynthesis; isopentenyl diphosphate biosynthesis via DXP pathway; isopentenyl diphosphate from 1-deoxy-D-xylulose 5-phosphate: step 1/6. Catalyzes the NADPH-dependent rearrangement and reduction of 1-deoxy-D-xylulose-5-phosphate (DXP) to 2-C-methyl-D-erythritol 4-phosphate (MEP). This Streptomyces coelicolor (strain ATCC BAA-471 / A3(2) / M145) protein is 1-deoxy-D-xylulose 5-phosphate reductoisomerase.